The primary structure comprises 319 residues: uncharacterized protein (319 aa).

The disordered stretch occupies residues 21-70; the sequence is ETETLKNSTDEVQTSSSFSSSGGRQSSPLTSGSKLEREKQTPSLEQGDTQ. Over residues 25 to 34 the composition is skewed to polar residues; that stretch reads LKNSTDEVQT. Residues 35–51 are compositionally biased toward low complexity; it reads SSSFSSSGGRQSSPLTS. Over residues 61–70 the composition is skewed to polar residues; the sequence is TPSLEQGDTQ.

This is an uncharacterized protein from Homo sapiens (Human).